We begin with the raw amino-acid sequence, 281 residues long: Protein ZAR1-like 1.S (281 aa).

The segment at 183-267 adopts a 3CxxC-type zinc-finger fold; it reads QKYGFFQCKD…QDLCGRCKGQ (85 aa).

The protein belongs to the ZAR1 family. In terms of assembly, component of a cytoplasmic ribonucleoprotein complex together with eif4enif1/4E-T and cpeb1. Expressed in oocytes.

Its subcellular location is the cytoplasm. The protein resides in the cytoplasmic ribonucleoprotein granule. MRNA-binding protein required for maternal mRNA storage, translation and degradation during oocyte maturation. Controls timing of meiosis during oogenesis. Probably promotes formation of some phase-separated membraneless compartment that stores maternal mRNAs in oocytes: acts by undergoing liquid-liquid phase separation upon binding to maternal mRNAs. Binds to the 3'-UTR of maternal mRNAs, inhibiting their translation. In Xenopus laevis (African clawed frog), this protein is Protein ZAR1-like 1.S.